The primary structure comprises 207 residues: FMN-dependent NADH:quinone oxidoreductase (207 aa).

FMN contacts are provided by residues serine 10, 16–18 (SIS), 96–99 (MYNL), and 141–144 (SRGG).

The protein belongs to the azoreductase type 1 family. Homodimer. It depends on FMN as a cofactor.

It catalyses the reaction 2 a quinone + NADH + H(+) = 2 a 1,4-benzosemiquinone + NAD(+). The catalysed reaction is N,N-dimethyl-1,4-phenylenediamine + anthranilate + 2 NAD(+) = 2-(4-dimethylaminophenyl)diazenylbenzoate + 2 NADH + 2 H(+). Quinone reductase that provides resistance to thiol-specific stress caused by electrophilic quinones. Its function is as follows. Also exhibits azoreductase activity. Catalyzes the reductive cleavage of the azo bond in aromatic azo compounds to the corresponding amines. This is FMN-dependent NADH:quinone oxidoreductase from Nostoc sp. (strain PCC 7120 / SAG 25.82 / UTEX 2576).